A 284-amino-acid polypeptide reads, in one-letter code: 4-hydroxybenzoate octaprenyltransferase (284 aa).

The next 9 helical transmembrane spans lie at 19–39 (IGTL…AKGM), 42–62 (FDVL…GCVI), 93–113 (IVLF…MNPL), 114–134 (TIKL…MKRF), 136–156 (HLPQ…AWAA), 161–181 (LPSI…AYDT), 209–229 (LMVG…GMHY), 235–252 (FYWA…QQHL), and 264–284 (AFLN…ITFW).

This sequence belongs to the UbiA prenyltransferase family. It depends on Mg(2+) as a cofactor.

The protein resides in the cell inner membrane. It catalyses the reaction all-trans-octaprenyl diphosphate + 4-hydroxybenzoate = 4-hydroxy-3-(all-trans-octaprenyl)benzoate + diphosphate. Its pathway is cofactor biosynthesis; ubiquinone biosynthesis. Its function is as follows. Catalyzes the prenylation of para-hydroxybenzoate (PHB) with an all-trans polyprenyl group. Mediates the second step in the final reaction sequence of ubiquinone-8 (UQ-8) biosynthesis, which is the condensation of the polyisoprenoid side chain with PHB, generating the first membrane-bound Q intermediate 3-octaprenyl-4-hydroxybenzoate. The polypeptide is 4-hydroxybenzoate octaprenyltransferase (Vibrio atlanticus (strain LGP32) (Vibrio splendidus (strain Mel32))).